The sequence spans 268 residues: Protein CDV3 homolog (268 aa).

Over residues 40 to 50 (KREVVKPKKPE) the composition is skewed to basic and acidic residues. Disordered regions lie at residues 40–145 (KREV…ERVG) and 184–268 (QQAG…DEAS). Low complexity predominate over residues 51–61 (AAAGGVAVVGE). Over residues 76–85 (VEEEWKEFEE) the composition is skewed to acidic residues. Residues 98 to 107 (QLSTITAQES) are compositionally biased toward polar residues. Residues 123–132 (NYDEDDEDSN) are compositionally biased toward acidic residues. The segment covering 221–239 (RPEEQRKKKNEPAFEEVRH) has biased composition (basic and acidic residues).

Belongs to the CDV3 family.

The polypeptide is Protein CDV3 homolog (Drosophila yakuba (Fruit fly)).